A 513-amino-acid polypeptide reads, in one-letter code: Light-independent protochlorophyllide reductase subunit B (513 aa).

Position 36 (Asp36) interacts with [4Fe-4S] cluster. Asp299 (proton donor) is an active-site residue. 434 to 435 (GM) serves as a coordination point for substrate.

It belongs to the ChlB/BchB/BchZ family. In terms of assembly, protochlorophyllide reductase is composed of three subunits; ChlL, ChlN and ChlB. Forms a heterotetramer of two ChlB and two ChlN subunits. [4Fe-4S] cluster is required as a cofactor.

The protein localises to the plastid. It is found in the chloroplast. The enzyme catalyses chlorophyllide a + oxidized 2[4Fe-4S]-[ferredoxin] + 2 ADP + 2 phosphate = protochlorophyllide a + reduced 2[4Fe-4S]-[ferredoxin] + 2 ATP + 2 H2O. It functions in the pathway porphyrin-containing compound metabolism; chlorophyll biosynthesis (light-independent). Its function is as follows. Component of the dark-operative protochlorophyllide reductase (DPOR) that uses Mg-ATP and reduced ferredoxin to reduce ring D of protochlorophyllide (Pchlide) to form chlorophyllide a (Chlide). This reaction is light-independent. The NB-protein (ChlN-ChlB) is the catalytic component of the complex. This is Light-independent protochlorophyllide reductase subunit B from Staurastrum punctulatum (Green alga).